We begin with the raw amino-acid sequence, 470 residues long: UDP-N-acetylmuramate--L-alanine ligase (470 aa).

118-124 (GTHGKTT) contacts ATP.

Belongs to the MurCDEF family.

The protein localises to the cytoplasm. It catalyses the reaction UDP-N-acetyl-alpha-D-muramate + L-alanine + ATP = UDP-N-acetyl-alpha-D-muramoyl-L-alanine + ADP + phosphate + H(+). It functions in the pathway cell wall biogenesis; peptidoglycan biosynthesis. Functionally, cell wall formation. This Cereibacter sphaeroides (strain ATCC 17029 / ATH 2.4.9) (Rhodobacter sphaeroides) protein is UDP-N-acetylmuramate--L-alanine ligase.